The chain runs to 92 residues: Small ribosomal subunit protein uS19c (92 aa).

Belongs to the universal ribosomal protein uS19 family. Component of the chloroplast small ribosomal subunit (SSU). Mature 70S chloroplast ribosomes of higher plants consist of a small (30S) and a large (50S) subunit. The 30S small subunit contains 1 molecule of ribosomal RNA (16S rRNA) and 24 different proteins. The 50S large subunit contains 3 rRNA molecules (23S, 5S and 4.5S rRNA) and 33 different proteins. uS19c binds directly to 16S ribosomal RNA.

It localises to the plastid. It is found in the chloroplast. Component of the chloroplast ribosome (chloro-ribosome), a dedicated translation machinery responsible for the synthesis of chloroplast genome-encoded proteins, including proteins of the transcription and translation machinery and components of the photosynthetic apparatus. The protein is Small ribosomal subunit protein uS19c (rps19) of Spinacia oleracea (Spinach).